The sequence spans 532 residues: 2,3-bisphosphoglycerate-independent phosphoglycerate mutase (532 aa).

Mn(2+) is bound by residues Asp15 and Ser65. The active-site Phosphoserine intermediate is Ser65. Residues His126, 156 to 157 (RD), Arg188, Arg194, 258 to 261 (RPDR), and Lys331 contribute to the substrate site. The Mn(2+) site is built by Asp398, His402, Asp439, His440, and His457.

Belongs to the BPG-independent phosphoglycerate mutase family. As to quaternary structure, monomer. The cofactor is Mn(2+).

It catalyses the reaction (2R)-2-phosphoglycerate = (2R)-3-phosphoglycerate. The protein operates within carbohydrate degradation; glycolysis; pyruvate from D-glyceraldehyde 3-phosphate: step 3/5. In terms of biological role, catalyzes the interconversion of 2-phosphoglycerate and 3-phosphoglycerate. The sequence is that of 2,3-bisphosphoglycerate-independent phosphoglycerate mutase from Rippkaea orientalis (strain PCC 8801 / RF-1) (Cyanothece sp. (strain PCC 8801)).